Here is a 513-residue protein sequence, read N- to C-terminus: Gluconokinase (513 aa).

ATP is bound by residues lysine 16, threonine 261, glycine 300, and 412-416; that span reads GFARS.

It belongs to the FGGY kinase family.

It carries out the reaction D-gluconate + ATP = 6-phospho-D-gluconate + ADP + H(+). Its pathway is carbohydrate acid metabolism; D-gluconate degradation. Its activity is regulated as follows. Catabolite repression by gluconate. In Bacillus licheniformis, this protein is Gluconokinase (gntK).